A 188-amino-acid chain; its full sequence is Peptidyl-tRNA hydrolase (188 aa).

Tyrosine 14 provides a ligand contact to tRNA. Histidine 19 serves as the catalytic Proton acceptor. TRNA is bound by residues tyrosine 64, asparagine 66, and asparagine 112.

The protein belongs to the PTH family. Monomer.

It localises to the cytoplasm. It catalyses the reaction an N-acyl-L-alpha-aminoacyl-tRNA + H2O = an N-acyl-L-amino acid + a tRNA + H(+). Its function is as follows. Hydrolyzes ribosome-free peptidyl-tRNAs (with 1 or more amino acids incorporated), which drop off the ribosome during protein synthesis, or as a result of ribosome stalling. In terms of biological role, catalyzes the release of premature peptidyl moieties from peptidyl-tRNA molecules trapped in stalled 50S ribosomal subunits, and thus maintains levels of free tRNAs and 50S ribosomes. The protein is Peptidyl-tRNA hydrolase of Bacillus licheniformis (strain ATCC 14580 / DSM 13 / JCM 2505 / CCUG 7422 / NBRC 12200 / NCIMB 9375 / NCTC 10341 / NRRL NRS-1264 / Gibson 46).